Reading from the N-terminus, the 83-residue chain is NADH dehydrogenase [ubiquinone] iron-sulfur protein 5-B (83 aa).

A CHCH domain is found at 11 to 52 (KGRCYDFWMDFSECMSHCREPKDCTLLREDYLECLHHSKEFQ). 2 short sequence motifs (cx9C motif) span residues 14–24 (CYDFWMDFSEC) and 34–44 (CTLLREDYLEC). Cystine bridges form between C14–C44 and C24–C34. The interval 62–83 (QRKLRAASRKGEETGDGTHTHH) is disordered.

This sequence belongs to the complex I NDUFS5 subunit family. In terms of assembly, complex I is composed of at least 49 different subunits. This is a component of the iron-sulfur (IP) fragment of the enzyme.

It localises to the mitochondrion. Its subcellular location is the mitochondrion inner membrane. It is found in the mitochondrion intermembrane space. Accessory subunit of the mitochondrial membrane respiratory chain NADH dehydrogenase (Complex I), that is believed not to be involved in catalysis. Complex I functions in the transfer of electrons from NADH to the respiratory chain. The immediate electron acceptor for the enzyme is believed to be ubiquinone. This chain is NADH dehydrogenase [ubiquinone] iron-sulfur protein 5-B, found in Arabidopsis thaliana (Mouse-ear cress).